Consider the following 364-residue polypeptide: Methylthioribose-1-phosphate isomerase (364 aa).

Asp-246 serves as the catalytic Proton donor.

Belongs to the eIF-2B alpha/beta/delta subunits family. MtnA subfamily.

The protein resides in the cytoplasm. It is found in the nucleus. It catalyses the reaction 5-(methylsulfanyl)-alpha-D-ribose 1-phosphate = 5-(methylsulfanyl)-D-ribulose 1-phosphate. The protein operates within amino-acid biosynthesis; L-methionine biosynthesis via salvage pathway; L-methionine from S-methyl-5-thio-alpha-D-ribose 1-phosphate: step 1/6. In terms of biological role, catalyzes the interconversion of methylthioribose-1-phosphate (MTR-1-P) into methylthioribulose-1-phosphate (MTRu-1-P). This chain is Methylthioribose-1-phosphate isomerase, found in Bombyx mori (Silk moth).